A 224-amino-acid polypeptide reads, in one-letter code: LexA repressor (224 aa).

The H-T-H motif DNA-binding region spans 31-51 (RAEIANTLGFKSANAAEEHLQ). Catalysis depends on for autocatalytic cleavage activity residues Ser142 and Lys179.

Belongs to the peptidase S24 family. Homodimer.

The catalysed reaction is Hydrolysis of Ala-|-Gly bond in repressor LexA.. Its function is as follows. Represses a number of genes involved in the response to DNA damage (SOS response), including recA and lexA. In the presence of single-stranded DNA, RecA interacts with LexA causing an autocatalytic cleavage which disrupts the DNA-binding part of LexA, leading to derepression of the SOS regulon and eventually DNA repair. In Delftia acidovorans (strain DSM 14801 / SPH-1), this protein is LexA repressor.